Consider the following 134-residue polypeptide: Cerato-platanin (134 aa).

An N-terminal signal peptide occupies residues 1-14 (MKFSILPMIASAMA). The segment at 18–20 (SYD) is binding of oligomers of N-acetylglucosamine (GlcNAc). 3 binding of N-acetylglucosamine tetramer (GlcNAc-4) regions span residues 31 to 43 (SVAC…GLMA), 65 to 68 (GWDS), and 91 to 95 (DSGRG). Disulfide bonds link Cys-34–Cys-71 and Cys-74–Cys-129. Positions 113-116 (AGRV) are binding of oligomers of N-acetylglucosamine (GlcNAc).

It belongs to the cerato-platanin family. In terms of assembly, monomer.

Its subcellular location is the secreted. The protein localises to the cell wall. Phytotoxin which causes production of phytoalexin in platanus acerifolia, platanus occidentalis and platanus orientalis. Induces cell necrosis in tobacco leaves, and in callus cells and leaves of P.acerifolia. Induces reactive oxygen species (ROS) synthesis, nitric oxide (NO) production and mitogen-activated protein kinases (MAPKs) phosphorylation in the leaves of A.thaliana and P.acerifolia. Results in H(2)O(2) production on the epidermis around the stomata, rapid closure of the stomata, reduced photosynthetic and CO(2) assimilation rate, and an increase in a number of volatile organic compound (VOC) emission in A.thaliana leaves. Induces overexpression of genes related to salicylic acid- and ethylene-signaling, camalexin synthesis, ROS production and oxidative stress, and genes of various receptor kinases, and down-regulation of a number of jasmonic acid (JA)-signaling genes in A.thaliana leaves. Renders resistance against C.platani in A.thaliana and P.acerifolia. Renders localised resistance of A.thaliana against infection by virulent foliar pathogens B.cinerea and P.syringae pv. tomato. Binds cellulose analog carboxymethyl cellulose (CMC). Expansin-like protein with probable fungal and plant cell wall loosening activity based on its non-enzymatic cellulose weakening activity in vitro. Increases glucose production by cellulase after pre-incubation of cellulose with this protein. In contrast, according to PubMed:23512479, no synergistic effect with cellulases. May have a structural role in the fungal cell wall based on its ability to bind chitin, but does not bind beta-1,3-glucan. The polypeptide is Cerato-platanin (Ceratocystis fimbriata f. sp. platani).